A 177-amino-acid chain; its full sequence is R-phycoerythrin beta chain (177 aa).

Asparagine 35 and aspartate 39 together coordinate (2R,3E)-phycoerythrobilin. Positions 50, 54, and 61 each coordinate phycourobilin. Residues asparagine 72, 77–78 (RR), cysteine 82, and 84–85 (RD) each bind (2R,3E)-phycoerythrobilin. Asparagine 72 is modified (N4-methylasparagine). 147-148 (SG) is a binding site for phycourobilin. Cysteine 158 is a binding site for (2R,3E)-phycoerythrobilin.

It belongs to the phycobiliprotein family. Heterododecamer of 6 alpha and 6 beta chains. The basic functional unit of phycobiliproteins is a ring-shaped hexamer formed from two back-to-back trimers contacting via the alpha chain subunits. The trimers are composed of alpha/beta subunit heterodimers arranged around a three-fold axis of symmetry. The phycoerythrins also contain a gamma subunit which is located in the center of the hexamer. Post-translationally, contains two covalently linked phycoerythrobilin chromophores and one covalently linked phycourobilin chromophore.

The protein resides in the plastid. It is found in the chloroplast thylakoid membrane. Its function is as follows. Light-harvesting photosynthetic tetrapyrrole chromophore-protein from the phycobiliprotein complex. This Griffithsia monilis (Red alga) protein is R-phycoerythrin beta chain (cpeB).